Consider the following 271-residue polypeptide: WUSCHEL-related homeobox 6 (271 aa).

A DNA-binding region (homeobox; WUS-type) is located at residues A57–R121. Residues R118–E195 are disordered. Composition is skewed to basic and acidic residues over residues P132–Q148 and N180–E195.

Belongs to the WUS homeobox family. Highly expressed in developing ovules. Present in developing primordia and differentiating organs but absent in mature organs.

It is found in the nucleus. In terms of biological role, transcription factor that plays a central role in ovule patterning by regulating cell proliferation of the maternal integuments and differentiation of the maegaspore mother cell (MCC). Involved in AGAMOUS (AG) repression in leaves. This Arabidopsis thaliana (Mouse-ear cress) protein is WUSCHEL-related homeobox 6 (WOX6).